Reading from the N-terminus, the 1015-residue chain is Tolloid-like protein 2 (1015 aa).

The N-terminal stretch at 1–25 is a signal peptide; that stretch reads MPRATALGALVSLLLLLPLPRGAGG. Disordered regions lie at residues 24-49 and 88-130; these read GGLG…EQQL and VGAT…TTLL. Positions 26–149 are excised as a propeptide; that stretch reads LGERPDATAD…AKTFSPRVRR (124 aa). Residues 103–113 show a composition bias toward polar residues; sequence SESSPDTTAMD. The segment covering 115–125 has biased composition (basic and acidic residues); it reads GTKEAGKDGRE. The 201-residue stretch at 149–349 folds into the Peptidase M12A domain; sequence RATTSRTERI…AQARKLYKCP (201 aa). N-linked (GlcNAc...) asparagine glycosylation occurs at N171. Disulfide bonds link C192–C348, C212–C234, C214–C215, and C351–C377. Zn(2+) is bound at residue H242. E243 is an active-site residue. Zn(2+) is bound by residues H246 and H252. CUB domains follow at residues 351–463 and 464–576; these read CGET…YEAT and CGGD…FFKE. N-linked (GlcNAc...) asparagine glycans are attached at residues N361 and N392. 12 disulfides stabilise this stretch: C404–C426, C464–C490, C517–C539, C580–C592, C588–C601, C603–C616, C620–C646, C673–C695, C736–C747, C743–C756, C758–C771, and C776–C802. The region spanning 576-617 is the EGF-like 1; calcium-binding domain; that stretch reads EVDECSWPDHGGCEHRCVNTLGSYKCACDPGYELAADKKMCE. Positions 620–732 constitute a CUB 3 domain; sequence CGGFITKLNG…RGFRAHFFSD (113 aa). N-linked (GlcNAc...) asparagine glycosylation occurs at N628. An EGF-like 2; calcium-binding domain is found at 732–772; the sequence is DKDECAKDNGGCQHECVNTFGSYLCRCRNGYWLHENGHDCK. 2 consecutive CUB domains span residues 776 to 888 and 889 to 1005; these read CAHK…HSTE and CGGR…YTST. A glycan (N-linked (GlcNAc...) asparagine) is linked at N805. 3 disulfides stabilise this stretch: C829/C851, C889/C919, and C946/C968. An omega-N-methylarginine mark is found at R963 and R966.

Requires Zn(2+) as cofactor.

It localises to the secreted. Protease which specifically processes pro-lysyl oxidase. Required for the embryonic development. Predominant protease, which in the development, influences dorsal-ventral patterning and skeletogenesis. This is Tolloid-like protein 2 (TLL2) from Homo sapiens (Human).